The primary structure comprises 471 residues: Putative multidrug resistance protein MdtD (471 aa).

Residues 1–11 (MTDLPDSTRWQ) are Periplasmic-facing. The chain crosses the membrane as a helical span at residues 12-32 (LWIVAFGFFMQSLDTTIVNTA). Topologically, residues 33–48 (LPSMAQSLGESPLHMH) are cytoplasmic. Residues 49–69 (MVIVSYVLTVAVMLPASGWLA) traverse the membrane as a helical segment. The Periplasmic segment spans residues 70–76 (DKVGVRN). The chain crosses the membrane as a helical span at residues 77 to 97 (IFFTAIVLFTLGSLFCALSGT). The Cytoplasmic portion of the chain corresponds to 98 to 101 (LNEL). The chain crosses the membrane as a helical span at residues 102-124 (LLARALQGVGGAMMVPVGRLTVM). The Periplasmic portion of the chain corresponds to 125 to 137 (KIVPREQYMAAMT). A helical membrane pass occupies residues 138-158 (FVTLPGQVGPLLGPALGGLLV). The Cytoplasmic segment spans residues 159-164 (EYASWH). A helical membrane pass occupies residues 165-185 (WIFLINIPVGIIGAIATLMLM). Topologically, residues 186-196 (PNYTMQTRRFD) are periplasmic. The chain crosses the membrane as a helical span at residues 197–217 (LSGFLLLAVGMAVLTLALDGS). The Cytoplasmic portion of the chain corresponds to 218–224 (KGTGFSP). Residues 225–245 (LAIAGLVAVGVVALVLYLLHA) form a helical membrane-spanning segment. The Periplasmic segment spans residues 246 to 262 (QNNNRALFSLKLFRTRN). Residues 263 to 283 (FSLGLAGSFAGRIGSGMLPFM) form a helical membrane-spanning segment. Residues 284 to 285 (TP) are Cytoplasmic-facing. A helical membrane pass occupies residues 286 to 306 (VFLQIGLGFSPFHAGLMMIPM). Residues 307 to 341 (VLGSMGMKRIVVQVVNRFGYRRVLVATTLGLSLVT) lie on the Periplasmic side of the membrane. A helical transmembrane segment spans residues 342-362 (LLFMTTALLGWYYVLPFVLFL). Residues 363–395 (QGMVNSTRFSSMNTLTLKDLPDNLASSGNSLLS) are Cytoplasmic-facing. A helical membrane pass occupies residues 396 to 416 (MIMQLSMSIGVTIAGLLLGLF). At 417–430 (GSQHVSVDSGTTQT) the chain is on the periplasmic side. The chain crosses the membrane as a helical span at residues 431–451 (VFMYTWLSMAFIIALPAFVFA). At 452 to 471 (RVPSDTHQNVAISRRKRSAQ) the chain is on the cytoplasmic side.

The protein belongs to the major facilitator superfamily. TCR/Tet family.

The protein localises to the cell inner membrane. The sequence is that of Putative multidrug resistance protein MdtD from Escherichia coli O1:K1 / APEC.